A 651-amino-acid chain; its full sequence is DNA ligase (651 aa).

Residues 30 to 34, 79 to 80, and Glu-105 each bind NAD(+); these read DEEYD and SM. Lys-107 acts as the N6-AMP-lysine intermediate in catalysis. Residues Arg-128, Glu-162, and Lys-301 each coordinate NAD(+). Cys-395, Cys-398, Cys-411, and Cys-416 together coordinate Zn(2+). The 82-residue stretch at 570 to 651 folds into the BRCT domain; sequence ALNENISNKT…NALLGGDDEV (82 aa).

The protein belongs to the NAD-dependent DNA ligase family. LigA subfamily. Requires Mg(2+) as cofactor. The cofactor is Mn(2+).

The enzyme catalyses NAD(+) + (deoxyribonucleotide)n-3'-hydroxyl + 5'-phospho-(deoxyribonucleotide)m = (deoxyribonucleotide)n+m + AMP + beta-nicotinamide D-nucleotide.. In terms of biological role, DNA ligase that catalyzes the formation of phosphodiester linkages between 5'-phosphoryl and 3'-hydroxyl groups in double-stranded DNA using NAD as a coenzyme and as the energy source for the reaction. It is essential for DNA replication and repair of damaged DNA. The sequence is that of DNA ligase from Campylobacter lari (strain RM2100 / D67 / ATCC BAA-1060).